The sequence spans 241 residues: Ribosome-inactivating protein luffaculin 1 (241 aa).

Residues N28, N33, N77, and N84 are each glycosylated (N-linked (GlcNAc...) asparagine). Residue E159 is part of the active site. Residue N205 is glycosylated (N-linked (GlcNAc...) asparagine).

It belongs to the ribosome-inactivating protein family. Type 1 RIP subfamily.

The enzyme catalyses Endohydrolysis of the N-glycosidic bond at one specific adenosine on the 28S rRNA.. The polypeptide is Ribosome-inactivating protein luffaculin 1 (Luffa acutangula (Ridged gourd)).